Reading from the N-terminus, the 571-residue chain is Vesicle-associated protein 1-4 (571 aa).

The region spanning 1–126 (MSTDELLTFD…EETIFKIIYV (126 aa)) is the MSP 1 domain. A disordered region spans residues 132-154 (QSPVQEGLEDGSSPSASVSDKGN). Residues 143–153 (SSPSASVSDKG) are compositionally biased toward polar residues. Residues 176 to 296 (LLIIDPVDVQ…EETRLKVMYV (121 aa)) form the MSP 2 domain. The interval 297–322 (TPPQPPSPVQEGTEEGSSPRASVSDN) is disordered. A compositionally biased stretch (polar residues) spans 311–322 (EGSSPRASVSDN). The TIR domain maps to 356 to 493 (PQYQVFINFR…KWKEALSSVF (138 aa)). E430 is a catalytic residue.

Belongs to the VAMP-associated protein (VAP) (TC 9.B.17) family.

The enzyme catalyses NAD(+) + H2O = ADP-D-ribose + nicotinamide + H(+). Its function is as follows. May play a role in vesicle trafficking. The chain is Vesicle-associated protein 1-4 (PVA14) from Arabidopsis thaliana (Mouse-ear cress).